A 235-amino-acid polypeptide reads, in one-letter code: MTDSQTETHLSLILSDTAFPLSSFSYSYGLESYLSHQQVRDVNAFFNFLPLSLNSVLHTNLPTVKAAWESPQQYSEIEDFFESTQTCTIAQKVSTMQGKSLLNIWTKSLSFFVTSTDVFKYLDEYERRVRSKKALGHFPVVWGVVCRALGLSLERTCYLFLLGHAKSICSAAVRLDVLTSFQYVSTLAHPQTESLLRDSSQLALNMQLEDTAQSWYTLDLWQGRHSLLYSRIFNS.

Belongs to the UreF family.

It is found in the cytoplasm. The protein localises to the nucleus. Functionally, probably facilitates nickel incorporation. This is an uncharacterized protein from Schizosaccharomyces pombe (strain 972 / ATCC 24843) (Fission yeast).